A 182-amino-acid polypeptide reads, in one-letter code: Coiled-coil domain-containing protein 32 (182 aa).

The segment covering 1–10 has biased composition (basic and acidic residues); the sequence is MMIDDFETHA. 2 disordered regions span residues 1-61 and 153-182; these read MMID…FSPW and PTQNSETPASSSQTDKPCVEEEEECPSPEK. Residues 153–167 show a composition bias toward polar residues; that stretch reads PTQNSETPASSSQTD. A compositionally biased stretch (acidic residues) spans 172–182; it reads EEEEECPSPEK.

Associates with adaptor protein complex 2 (AP-2).

It is found in the membrane. The protein resides in the coated pit. In terms of biological role, regulates clathrin-mediated endocytsois of cargos such as transferrin probably through the association and modulation of adaptor protein complex 2 (AP-2). Has a role in ciliogenesis and is required for proper cephalic and left/right axis development. This chain is Coiled-coil domain-containing protein 32, found in Danio rerio (Zebrafish).